Here is a 155-residue protein sequence, read N- to C-terminus: Small ribosomal subunit protein uS7 (155 aa).

It belongs to the universal ribosomal protein uS7 family. In terms of assembly, part of the 30S ribosomal subunit. Contacts proteins S9 and S11.

One of the primary rRNA binding proteins, it binds directly to 16S rRNA where it nucleates assembly of the head domain of the 30S subunit. Is located at the subunit interface close to the decoding center, probably blocks exit of the E-site tRNA. This chain is Small ribosomal subunit protein uS7, found in Pseudothermotoga lettingae (strain ATCC BAA-301 / DSM 14385 / NBRC 107922 / TMO) (Thermotoga lettingae).